Consider the following 268-residue polypeptide: 4-hydroxy-tetrahydrodipicolinate reductase (268 aa).

Residues 8 to 13 and Glu-34 contribute to the NAD(+) site; that span reads GAAGRM. Arg-35 is an NADP(+) binding site. Residues 96 to 98 and 120 to 123 each bind NAD(+); these read GST and SPNM. The active-site Proton donor/acceptor is the His-153. Residue His-154 coordinates (S)-2,3,4,5-tetrahydrodipicolinate. Lys-157 serves as the catalytic Proton donor. 163 to 164 contacts (S)-2,3,4,5-tetrahydrodipicolinate; that stretch reads GT.

Belongs to the DapB family.

It is found in the cytoplasm. The enzyme catalyses (S)-2,3,4,5-tetrahydrodipicolinate + NAD(+) + H2O = (2S,4S)-4-hydroxy-2,3,4,5-tetrahydrodipicolinate + NADH + H(+). It carries out the reaction (S)-2,3,4,5-tetrahydrodipicolinate + NADP(+) + H2O = (2S,4S)-4-hydroxy-2,3,4,5-tetrahydrodipicolinate + NADPH + H(+). Its pathway is amino-acid biosynthesis; L-lysine biosynthesis via DAP pathway; (S)-tetrahydrodipicolinate from L-aspartate: step 4/4. Its function is as follows. Catalyzes the conversion of 4-hydroxy-tetrahydrodipicolinate (HTPA) to tetrahydrodipicolinate. The chain is 4-hydroxy-tetrahydrodipicolinate reductase from Anaeromyxobacter sp. (strain Fw109-5).